We begin with the raw amino-acid sequence, 120 residues long: Large ribosomal subunit protein uL18 (120 aa).

The protein belongs to the universal ribosomal protein uL18 family. As to quaternary structure, part of the 50S ribosomal subunit; part of the 5S rRNA/L5/L18/L25 subcomplex. Contacts the 5S and 23S rRNAs.

This is one of the proteins that bind and probably mediate the attachment of the 5S RNA into the large ribosomal subunit, where it forms part of the central protuberance. This Macrococcus caseolyticus (strain JCSC5402) (Macrococcoides caseolyticum) protein is Large ribosomal subunit protein uL18.